A 694-amino-acid chain; its full sequence is GRB2-associated-binding protein 1 (694 aa).

Ser2 carries the N-acetylserine modification. Residues 5–116 (EVVCSGWLRK…WVRCICDICG (112 aa)) form the PH domain. 2 disordered regions span residues 122–164 (EDPV…PYQL) and 194–231 (PEPTRTHADSAKSTSSETDCNDNVPSHKNPASSQSKHG). Over residues 145–157 (APPSTQADSSSAT) the composition is skewed to polar residues. Residues 194 to 203 (PEPTRTHADS) are compositionally biased toward basic and acidic residues. Over residues 204-231 (AKSTSSETDCNDNVPSHKNPASSQSKHG) the composition is skewed to polar residues. 4 positions are modified to phosphoserine: Ser251, Ser253, Ser266, and Ser304. The segment at 323–386 (FPEGTLGQTS…TAGMSPSRSN (64 aa)) is disordered. Residues 362 to 386 (IPRTASDTDSSYCIPTAGMSPSRSN) are compositionally biased toward polar residues. Phosphothreonine is present on Thr387. Ser402 and Ser454 each carry phosphoserine. Disordered regions lie at residues 493-532 (AHMGFRSSPKTPPRRPVPVADCEPPPVDRNLKPDRKVKPA) and 544-656 (ELQA…ADER). Residue Ala547 is modified to Phosphoserine. Polar residues predominate over residues 594 to 611 (PNLSSEDPNLFGSNSLDG). Position 627 is a phosphotyrosine (Tyr627). Thr638 carries the post-translational modification Phosphothreonine. Position 651 is a phosphoserine (Ser651). Tyr659 is subject to Phosphotyrosine. Residues 671 to 694 (KSTREAWTDGRQSTESETPAKSVK) are disordered. The segment covering 672-684 (STREAWTDGRQST) has biased composition (basic and acidic residues). Ser683 is subject to Phosphoserine. The segment covering 685-694 (ESETPAKSVK) has biased composition (polar residues).

It belongs to the GAB family. Identified in a complex containing FRS2, GRB2, GAB1, PIK3R1 and SOS1. Forms a tripartite complex containing GAB1, METTL13 and SPRY2. Within the complex interacts with METTL13. Interacts with GRB2 and with other SH2-containing proteins. Interacts with phosphorylated LAT2. Interacts with PTPRJ. Interacts (phosphorylated) with PTPN11. Interacts with HCK. Post-translationally, phosphorylated in response to FGFR1 activation. Phosphorylated on tyrosine residue(s) by the epidermal growth factor receptor (EGFR) and the insulin receptor (INSR). Tyrosine phosphorylation of GAB1 mediates interaction with several proteins that contain SH2 domains. Phosphorylated on tyrosine residues by HCK upon IL6 signaling.

In terms of biological role, adapter protein that plays a role in intracellular signaling cascades triggered by activated receptor-type kinases. Plays a role in FGFR1 signaling. Probably involved in signaling by the epidermal growth factor receptor (EGFR) and the insulin receptor (INSR). Involved in the MET/HGF-signaling pathway. The sequence is that of GRB2-associated-binding protein 1 (GAB1) from Homo sapiens (Human).